Here is a 545-residue protein sequence, read N- to C-terminus: Phospholipase B-like 1 (545 aa).

The N-terminal stretch at 1 to 35 (MSRHSQDERLGLPQPPALLPLLLLLLAVAVPLSQA) is a signal peptide. An N-linked (GlcNAc...) (high mannose) asparagine; alternate glycan is attached at N68. N-linked (GlcNAc...) (hybrid) asparagine; alternate glycosylation occurs at N68. The propeptide at 206 to 224 (LSPTKNSSLKFFKRWDMGH) is removed in mature form. Residues N305, N363, and N408 are each glycosylated (N-linked (GlcNAc...) (high mannose) asparagine; alternate). N-linked (GlcNAc...) (hybrid) asparagine; alternate glycans are attached at residues N305, N363, and N408. 2 cysteine pairs are disulfide-bonded: C467–C472 and C471–C486. The N-linked (GlcNAc...) (high mannose) asparagine; alternate glycan is linked to N523. N-linked (GlcNAc...) (hybrid) asparagine; alternate glycosylation is present at N523.

The protein belongs to the phospholipase B-like family. In terms of assembly, may form a homodimer, each monomer is composed of a chain A and a chain B. In terms of processing, the maturation cleavages that produces chains A and B are required to open the putative substrate binding pocket. Both chains A and B remain associated in the mature protein.

It is found in the lysosome. Functionally, exhibits a weak phospholipase activity, acting on various phospholipids, including phosphatidylcholine, phosphatidylinositol, phosphatidylethanolamine and lysophospholipids. However, in view of the small size of the putative binding pocket, it has been proposed that it may act rather as an amidase or a peptidase. The chain is Phospholipase B-like 1 (PLBD1) from Bos taurus (Bovine).